Here is a 285-residue protein sequence, read N- to C-terminus: Tyrosine recombinase XerA (285 aa).

In terms of domain architecture, Core-binding (CB) spans 7-84 (IVNSDILEEF…ALKSYFKFEG (78 aa)). One can recognise a Tyr recombinase domain in the interval 100-274 (SLPKSLTEDE…TTKHLREAIE (175 aa)). Catalysis depends on residues arginine 135, lysine 160, histidine 226, arginine 229, and histidine 252. Tyrosine 261 acts as the O-(3'-phospho-DNA)-tyrosine intermediate in catalysis.

It belongs to the 'phage' integrase family. XerA subfamily.

It localises to the cytoplasm. Its function is as follows. Site-specific tyrosine recombinase, which acts by catalyzing the cutting and rejoining of the recombining DNA molecules. This chain is Tyrosine recombinase XerA, found in Pyrococcus horikoshii (strain ATCC 700860 / DSM 12428 / JCM 9974 / NBRC 100139 / OT-3).